Here is a 756-residue protein sequence, read N- to C-terminus: Ent-kaur-16-ene synthase, chloroplastic (756 aa).

Mg(2+) is bound by residues Asp-496, Asp-500, Asn-639, and Glu-647. Residues 496–500 (DDFFD) carry the DDXXD motif motif.

Belongs to the terpene synthase family. Requires Mg(2+) as cofactor. Highly expressed in panicles and at lower levels in leaves and stems.

It is found in the plastid. It localises to the chloroplast. The enzyme catalyses ent-copalyl diphosphate = ent-kaur-16-ene + diphosphate. Its pathway is plant hormone biosynthesis; gibberellin biosynthesis. In terms of biological role, catalyzes the conversion of ent-copalyl diphosphate to the gibberellin precursor ent-kaur-16-ene. This chain is Ent-kaur-16-ene synthase, chloroplastic (KS1), found in Oryza sativa subsp. japonica (Rice).